The following is a 134-amino-acid chain: RxLR effector protein 4 (134 aa).

A signal peptide spans 1-22 (MRSLFYIAVAVAVFARSSAVAA). A disordered region spans residues 43–65 (AMASSDSRKRFLRATDPEDGDLQ). Basic and acidic residues predominate over residues 48 to 58 (DSRKRFLRATD). The RxLR-dEER signature appears at 52-71 (RFLRATDPEDGDLQADDEER).

It belongs to the RxLR effector family.

It localises to the secreted. Effector that enhances plant susceptibility to P.parasitica in Nicotiana benthamiana and Arabidopsis thaliana. Triggers non-specific cell death in a variety of plants, including tobacco, tomato, potato and A.thaliana. E4-induced cell death is dependent on HSP90, NPK and SGT1, suggesting that PpE4 is recognized by the plant immune system. This Phytophthora nicotianae (strain INRA-310) (Phytophthora parasitica) protein is RxLR effector protein 4.